Reading from the N-terminus, the 145-residue chain is Protein SprT-like (145 aa).

A SprT-like domain is found at 5–141 (NYVKQVSVED…CGRCMGKLRL (137 aa)). Residue histidine 64 participates in Zn(2+) binding. Residue glutamate 65 is part of the active site. Residue histidine 68 coordinates Zn(2+).

This sequence belongs to the SprT family. The cofactor is Zn(2+).

The protein resides in the cytoplasm. This chain is Protein SprT-like, found in Streptococcus sanguinis (strain SK36).